Consider the following 336-residue polypeptide: uncharacterized protein (336 aa).

The first 33 residues, 1 to 33 (MGSAWPAEIRKIAKISKRLLGATVILGFGVAEA), serve as a signal peptide directing secretion.

This is an uncharacterized protein from Sinorhizobium fredii (strain NBRC 101917 / NGR234).